We begin with the raw amino-acid sequence, 201 residues long: Probable chemoreceptor glutamine deamidase CheD (201 aa).

Belongs to the CheD family.

It carries out the reaction L-glutaminyl-[protein] + H2O = L-glutamyl-[protein] + NH4(+). Functionally, probably deamidates glutamine residues to glutamate on methyl-accepting chemotaxis receptors (MCPs), playing an important role in chemotaxis. The chain is Probable chemoreceptor glutamine deamidase CheD from Chlorobium luteolum (strain DSM 273 / BCRC 81028 / 2530) (Pelodictyon luteolum).